Reading from the N-terminus, the 421-residue chain is UDP-N-acetylglucosamine 1-carboxyvinyltransferase (421 aa).

22–23 serves as a coordination point for phosphoenolpyruvate; that stretch reads KN. Arg-92 serves as a coordination point for UDP-N-acetyl-alpha-D-glucosamine. Cys-116 acts as the Proton donor in catalysis. Cys-116 carries the 2-(S-cysteinyl)pyruvic acid O-phosphothioketal modification. UDP-N-acetyl-alpha-D-glucosamine-binding positions include 121–125, Asp-308, and Ile-330; that span reads RPVDQ.

It belongs to the EPSP synthase family. MurA subfamily.

It is found in the cytoplasm. The catalysed reaction is phosphoenolpyruvate + UDP-N-acetyl-alpha-D-glucosamine = UDP-N-acetyl-3-O-(1-carboxyvinyl)-alpha-D-glucosamine + phosphate. It participates in cell wall biogenesis; peptidoglycan biosynthesis. Cell wall formation. Adds enolpyruvyl to UDP-N-acetylglucosamine. The chain is UDP-N-acetylglucosamine 1-carboxyvinyltransferase from Ralstonia nicotianae (strain ATCC BAA-1114 / GMI1000) (Ralstonia solanacearum).